Reading from the N-terminus, the 397-residue chain is UDP-GlcNAc:betaGal beta-1,3-N-acetylglucosaminyltransferase 8 (397 aa).

The Cytoplasmic segment spans residues 1-6; it reads MRCPKC. The helical; Signal-anchor for type II membrane protein transmembrane segment at 7–23 threads the bilayer; the sequence is LLCLSALLTLLGLKVYI. The Lumenal segment spans residues 24-397; that stretch reads EWTSESRLSK…KQLQDPRLQC (374 aa). Residues 33–58 form a disordered region; it reads KAYPSPRGTPPSPTPANPEPTLPANL. Positions 39 to 53 are enriched in pro residues; the sequence is RGTPPSPTPANPEPT. Asn57 is a glycosylation site (N-linked (GlcNAc...) asparagine).

This sequence belongs to the glycosyltransferase 31 family. In terms of assembly, interacts with B3GNT2; this interaction greatly increases B3GNT2 catalytic activity, independently of B3GNT8 enzymatic activity. Highly expressed in small intestine, pancreas, spleen, bone marrow, lung, throat, and ileum, and weakly in fetal brain, cerebellum, heart, liver, tongue, breast, uteri, and testis. Not detected in colon. Differentially expressed in human tumor cell lines.

The protein resides in the golgi apparatus membrane. It functions in the pathway protein modification; protein glycosylation. In terms of biological role, beta-1,3-N-acetylglucosaminyltransferase that plays a role in the elongation of specific branch structures of multiantennary N-glycans. Has strong activity towards tetraantennary N-glycans and 2,6 triantennary glycans. This is UDP-GlcNAc:betaGal beta-1,3-N-acetylglucosaminyltransferase 8 from Homo sapiens (Human).